The primary structure comprises 160 residues: Small ribosomal subunit protein uS7 (160 aa).

Belongs to the universal ribosomal protein uS7 family. As to quaternary structure, part of the 30S ribosomal subunit. Contacts proteins S9 and S11.

Its function is as follows. One of the primary rRNA binding proteins, it binds directly to 16S rRNA where it nucleates assembly of the head domain of the 30S subunit. Is located at the subunit interface close to the decoding center, probably blocks exit of the E-site tRNA. The protein is Small ribosomal subunit protein uS7 of Ehrlichia chaffeensis (strain ATCC CRL-10679 / Arkansas).